Consider the following 364-residue polypeptide: 4-hydroxythreonine-4-phosphate dehydrogenase (364 aa).

Substrate contacts are provided by His148 and Thr149. A divalent metal cation contacts are provided by His177, His216, and His301. The substrate site is built by Lys309, Asn318, and Arg327.

The protein belongs to the PdxA family. As to quaternary structure, homodimer. The cofactor is Zn(2+). Mg(2+) is required as a cofactor. It depends on Co(2+) as a cofactor.

Its subcellular location is the cytoplasm. It carries out the reaction 4-(phosphooxy)-L-threonine + NAD(+) = 3-amino-2-oxopropyl phosphate + CO2 + NADH. It participates in cofactor biosynthesis; pyridoxine 5'-phosphate biosynthesis; pyridoxine 5'-phosphate from D-erythrose 4-phosphate: step 4/5. Its function is as follows. Catalyzes the NAD(P)-dependent oxidation of 4-(phosphooxy)-L-threonine (HTP) into 2-amino-3-oxo-4-(phosphooxy)butyric acid which spontaneously decarboxylates to form 3-amino-2-oxopropyl phosphate (AHAP). The polypeptide is 4-hydroxythreonine-4-phosphate dehydrogenase (Campylobacter jejuni subsp. jejuni serotype O:23/36 (strain 81-176)).